Reading from the N-terminus, the 560-residue chain is Secreted RxLR effector protein 142 (560 aa).

Positions methionine 1–glycine 22 are cleaved as a signal peptide. Disordered regions lie at residues glutamine 48–proline 73 and isoleucine 354–glutamine 377. The span at glutamate 54 to threonine 72 shows a compositional bias: basic and acidic residues. The short motif at arginine 56–arginine 71 is the RxLR-dEER element. Residues glycine 361–glutamine 377 are compositionally biased toward polar residues.

The protein belongs to the RxLR effector family.

It localises to the secreted. The protein localises to the host nucleus. Its function is as follows. Secreted effector that completely suppresses the host cell death induced by cell death-inducing proteins. The chain is Secreted RxLR effector protein 142 from Plasmopara viticola (Downy mildew of grapevine).